The sequence spans 882 residues: Valine--tRNA ligase (882 aa).

Positions 45–55 (PNVTGKLHLGH) match the 'HIGH' region motif. The 'KMSKS' region signature appears at 519-523 (KMSKS). Position 522 (Lys-522) interacts with ATP. A coiled-coil region spans residues 808-882 (LADLLNVEEE…RIAEMKKIKS (75 aa)).

This sequence belongs to the class-I aminoacyl-tRNA synthetase family. ValS type 1 subfamily. Monomer.

The protein resides in the cytoplasm. It catalyses the reaction tRNA(Val) + L-valine + ATP = L-valyl-tRNA(Val) + AMP + diphosphate. Catalyzes the attachment of valine to tRNA(Val). As ValRS can inadvertently accommodate and process structurally similar amino acids such as threonine, to avoid such errors, it has a 'posttransfer' editing activity that hydrolyzes mischarged Thr-tRNA(Val) in a tRNA-dependent manner. The chain is Valine--tRNA ligase from Streptococcus pyogenes serotype M1.